Reading from the N-terminus, the 87-residue chain is Small ribosomal subunit protein bS18 (87 aa).

The protein belongs to the bacterial ribosomal protein bS18 family. As to quaternary structure, part of the 30S ribosomal subunit. Forms a tight heterodimer with protein bS6.

Its function is as follows. Binds as a heterodimer with protein bS6 to the central domain of the 16S rRNA, where it helps stabilize the platform of the 30S subunit. This chain is Small ribosomal subunit protein bS18, found in Nitratidesulfovibrio vulgaris (strain ATCC 29579 / DSM 644 / CCUG 34227 / NCIMB 8303 / VKM B-1760 / Hildenborough) (Desulfovibrio vulgaris).